The chain runs to 354 residues: MRLAVLFSGALLGLLAAQGTGNDCPHKKSATLLPSFTVTPTVTESTGTTSHRTTKSHKTTTHRTTTTGTTSHGPTTATHNPTTTSHGNVTVHPTSNSTATSQGPSTATHSPATTSHGNATVHPTSNSTATSPGFTSSAHPEPPPPSPSPSPTSKETIGDYTWTNGSQPCVHLQAQIQIRVMYTTQGGGEAWGISVLNPNKTKVQGSCEGAHPHLLLSFPYGHLSFGFMQDLQQKVVYLSYMAVEYNVSFPHAAQWTFSAQNASLRDLQAPLGQSFSCSNSSIILSPAVHLDLLSLRLQAAQLPHTGVFGQSFSCPSDRSILLPLIIGLILLGLLALVLIAFCIIRRRPSAYQAL.

Positions 1-21 are cleaved as a signal peptide; sequence MRLAVLFSGALLGLLAAQGTG. At 22-319 the chain is on the extracellular side; it reads NDCPHKKSAT…QSFSCPSDRS (298 aa). A mucin-like region spans residues 23-140; it reads DCPHKKSATL…SPGFTSSAHP (118 aa). Residues 40–51 are compositionally biased toward low complexity; sequence PTVTESTGTTSH. The tract at residues 40 to 162 is disordered; that stretch reads PTVTESTGTT…SKETIGDYTW (123 aa). Basic residues predominate over residues 52–61; the sequence is RTTKSHKTTT. Positions 62-84 are enriched in low complexity; it reads HRTTTTGTTSHGPTTATHNPTTT. 2 tandem repeats follow at residues 70–99 and 100–129. The 2 X 30 AA tandem repeats stretch occupies residues 70–129; the sequence is TSHGPTTATHNPTTTSHGNVTVHPTSNSTATSQGPSTATHSPATTSHGNATVHPTSNSTA. Residues 85–102 show a composition bias toward polar residues; that stretch reads SHGNVTVHPTSNSTATSQ. 2 N-linked (GlcNAc...) asparagine glycosylation sites follow: Asn88 and Asn96. Low complexity predominate over residues 103 to 117; it reads GPSTATHSPATTSHG. Residues Asn118 and Asn126 are each glycosylated (N-linked (GlcNAc...) asparagine). Residues 121-135 are compositionally biased toward polar residues; sequence VHPTSNSTATSPGFT. A compositionally biased stretch (pro residues) spans 140-150; sequence PEPPPPSPSPS. N-linked (GlcNAc...) asparagine glycans are attached at residues Asn164, Asn199, Asn246, Asn261, and Asn279. A disulfide bond links Cys169 and Cys207. A disulfide bridge links Cys277 with Cys314. The chain crosses the membrane as a helical span at residues 320–344; the sequence is ILLPLIIGLILLGLLALVLIAFCII. Over 345-354 the chain is Cytoplasmic; sequence RRRPSAYQAL.

This sequence belongs to the LAMP family. Post-translationally, N- and O-glycosylated. Highly expressed by blood monocytes and tissue macrophages. Also expressed in lymphocytes, fibroblasts and endothelial cells. Expressed in many tumor cell lines which could allow them to attach to selectins on vascular endothelium, facilitating their dissemination to secondary sites.

The protein resides in the cell membrane. It is found in the endosome membrane. Its subcellular location is the lysosome membrane. Functionally, could play a role in phagocytic activities of tissue macrophages, both in intracellular lysosomal metabolism and extracellular cell-cell and cell-pathogen interactions. Binds to tissue- and organ-specific lectins or selectins, allowing homing of macrophage subsets to particular sites. Rapid recirculation of CD68 from endosomes and lysosomes to the plasma membrane may allow macrophages to crawl over selectin-bearing substrates or other cells. This is Macrosialin (CD68) from Homo sapiens (Human).